Here is a 119-residue protein sequence, read N- to C-terminus: Ribonuclease pancreatic (119 aa).

Pyrrolidone carboxylic acid is present on glutamine 1. The Proton acceptor role is filled by histidine 10. Cystine bridges form between cysteine 25/cysteine 80, cysteine 39/cysteine 91, and cysteine 57/cysteine 106. Residue lysine 40–threonine 44 coordinates substrate. The active-site Proton donor is histidine 113.

The protein belongs to the pancreatic ribonuclease family. In terms of assembly, monomer. Interacts with and forms tight 1:1 complexes with RNH1. Dimerization of two such complexes may occur. Interaction with RNH1 inhibits this protein. Pancreas.

It is found in the secreted. The catalysed reaction is an [RNA] containing cytidine + H2O = an [RNA]-3'-cytidine-3'-phosphate + a 5'-hydroxy-ribonucleotide-3'-[RNA].. It catalyses the reaction an [RNA] containing uridine + H2O = an [RNA]-3'-uridine-3'-phosphate + a 5'-hydroxy-ribonucleotide-3'-[RNA].. Its function is as follows. Endonuclease that catalyzes the cleavage of RNA on the 3' side of pyrimidine nucleotides. Acts on single-stranded and double-stranded RNA. The sequence is that of Ribonuclease pancreatic from Iguana iguana (Common iguana).